Here is a 359-residue protein sequence, read N- to C-terminus: 4-galactosyl-N-acetylglucosaminide 3-alpha-L-fucosyltransferase FUT6 (359 aa).

Over 1–14 the chain is Cytoplasmic; the sequence is MDPLGPAKPQWSWR. A helical; Signal-anchor for type II membrane protein transmembrane segment spans residues 15–34; it reads CCLTTLLFQLLVAVCFFSYL. The Lumenal portion of the chain corresponds to 35–359; the sequence is RVSRDDPTVY…QTRSIAAWFT (325 aa). Asparagine 46, asparagine 91, asparagine 153, and asparagine 184 each carry an N-linked (GlcNAc...) asparagine glycan. The segment at 73 to 112 is determines site-specific fucosylation; it reads KPIALPRCSEMVPGTADCNITADRKVYPQADAVIVHHREV.

Belongs to the glycosyltransferase 10 family. In terms of assembly, homodimer and monomer. Monomer (secreted form). N-glycosylated. Post-translationally, proteolytic cleavage releases a secreted glycoform of 43 kDa.

It is found in the golgi apparatus. The protein resides in the golgi stack membrane. It localises to the secreted. The enzyme catalyses a beta-D-galactosyl-(1-&gt;4)-N-acetyl-beta-D-glucosaminyl derivative + GDP-beta-L-fucose = a beta-D-galactosyl-(1-&gt;4)-[alpha-L-fucosyl-(1-&gt;3)]-N-acetyl-beta-D-glucosaminyl derivative + GDP + H(+). It catalyses the reaction an N-acetyl-alpha-neuraminyl-(2-&gt;3)-beta-D-galactosyl-(1-&gt;4)-N-acetyl-beta-D-glucosaminyl derivative + GDP-beta-L-fucose = an alpha-Neu5Ac-(2-&gt;3)-beta-D-Gal-(1-&gt;4)-[alpha-L-Fuc-(1-&gt;3)]-beta-D-GlcNAc derivative + GDP + H(+). It carries out the reaction an alpha-Neu5Ac-(2-&gt;3)-beta-D-Gal-(1-&gt;4)-beta-D-GlcNAc-(1-&gt;3)-beta-D-Gal-(1-&gt;4)-[alpha-L-Fuc-(1-&gt;3)]-beta-D-GlcNAc derivative + GDP-beta-L-fucose = an alpha-Neu5Ac-(2-&gt;3)-beta-D-Gal-(1-&gt;4)-[alpha-L-Fuc-(1-&gt;3)]-beta-D-GlcNAc-(1-&gt;3)-beta-D-Gal-(1-&gt;4)-[alpha-L-Fuc-(1-&gt;3)]-beta-D-GlcNAc derivative + GDP + H(+). The catalysed reaction is a neolactoside nLc6Cer + GDP-beta-L-fucose = beta-D-Gal-(1-&gt;4)-[alpha-L-Fuc-(1-&gt;3)]-beta-D-GlcNAc-(1-&gt;3)-beta-D-Gal-(1-&gt;4)-beta-D-GlcNAc-(1-&gt;3)-beta-D-Gal-(1-&gt;4)-beta-D-Glc-(1&lt;-&gt;1')-Cer + GDP + H(+). The enzyme catalyses a neolactoside nLc6Cer + GDP-beta-L-fucose = beta-D-galactosyl-(1-&gt;4)-N-acetyl-beta-D-glucosaminyl-(1-&gt;3)-beta-D-galactosyl-(1-&gt;4)-[alpha-L-fucosyl-(1-&gt;3)]-N-acetyl-beta-D-glucosaminyl-(1-&gt;3)-beta-D-galactosyl-(1-&gt;4)-beta-D-glucosyl-(1&lt;-&gt;1')-ceramide + GDP + H(+). It catalyses the reaction a neolactoside VI(3)-alpha-NeuNAc-nLc6Cer + GDP-beta-L-fucose = a neolactoside VI(3)-alpha-NeuAc,V(3)-alphaFuc-nLc6Cer + GDP + H(+). It carries out the reaction beta-D-galactosyl-(1-&gt;4)-N-acetyl-D-glucosamine + GDP-beta-L-fucose = beta-D-galactosyl-(1-&gt;4)-[alpha-L-fucosyl-(1-&gt;3)]-N-acetyl-D-glucosamine + GDP + H(+). The catalysed reaction is N-acetyl-alpha-neuraminosyl-(2-&gt;3)-beta-D-galactosyl-(1-&gt;4)-N-acetyl-beta-D-glucosamine + GDP-beta-L-fucose = N-acetyl-alpha-neuraminosyl-(2-&gt;3)-beta-D-galactosyl-(1-&gt;4)-[alpha-L-fucosyl-(1-&gt;3)]-N-acetyl-beta-D-glucosamine + GDP + H(+). The enzyme catalyses lactose + GDP-beta-L-fucose = beta-D-galactosyl-(1-&gt;4)-[alpha-L-fucosyl-(1-&gt;3)]-D-glucose + GDP + H(+). It catalyses the reaction alpha-L-Fuc-(1-&gt;2)-beta-D-Gal-(1-&gt;4)-D-Glc + GDP-beta-L-fucose = alpha-L-Fuc-(1-&gt;2)-beta-D-Gal-(1-&gt;4)-[alpha-L-Fuc-(1-&gt;3)]-D-Glc + GDP + H(+). It carries out the reaction a beta-D-galactosyl-(1-&gt;4)-N-acetyl-beta-D-6-sulfooxy-glucosaminyl derivative + GDP-beta-L-fucose = a beta-D-galactosyl-(1-&gt;4)-[alpha-L-fucosyl-(1-&gt;3)]-N-acetyl-beta-D-6-sulfooxy-glucosaminyl derivative + GDP + H(+). Its pathway is protein modification; protein glycosylation. Catalyzes the transfer of L-fucose, from a guanosine diphosphate-beta-L-fucose, to the N-acetyl glucosamine (GlcNAc) of a distal alpha2,3 sialylated lactosamine unit of a glycoprotein- or glycolipid-linked sialopolylactosamines chain or of a distal or internal lactosamine unit of a neutral glycoprotein- or glycolipid-linked polylactosamines chain through an alpha-1,3 glycosidic linkage and participates in surface expression of the sialyl Lewis X (sLe(x)), Lewis X (Le(x)) and non sialylated VIM2 determinants. Moreover transfers fucose to H-type 2 (Fucalpha1-2Galbeta1-4GlcNAc) chain acceptor substrates and participates in difucosylated sialyl Lewis x determinants. Also fucosylates a polylactosamine substrate having a 6 sulfate modification at the GlcNAc moiety and gives rise to sialyl and non-sialyl 6-sulfo lewis X. Does not have activity towards type 1 ((Galbeta1-3GlcNAc)) and H-type 1 chain (Fucalpha1-2Galbeta1-3GlcNAc) acceptors substrates. This Pan troglodytes (Chimpanzee) protein is 4-galactosyl-N-acetylglucosaminide 3-alpha-L-fucosyltransferase FUT6.